Reading from the N-terminus, the 1032-residue chain is Suppression of tumorigenicity 18 protein (1032 aa).

3 disordered regions span residues 29 to 76 (RAEE…TNDH), 162 to 213 (GRDK…LTYN), and 325 to 354 (RQPK…AKCP). Residues 40–51 (NKRKSLLMKPRH) are compositionally biased toward basic residues. A compositionally biased stretch (basic and acidic residues) spans 52–76 (YSPDMDCKENPDNRNEDDGLETNDH). CCHHC-type zinc fingers lie at residues 344–387 (PRPE…PLEI), 388–431 (LAMH…KLAM), 700–743 (RDLK…LKSL), 744–787 (MAAN…GIKM), 792–835 (EEKE…QKEN), and 845–888 (KLNK…IKKV). Zn(2+) contacts are provided by Cys-353, Cys-358, His-371, Cys-377, Cys-397, Cys-402, His-415, Cys-421, Cys-709, Cys-714, His-727, Cys-733, Cys-753, Cys-758, His-771, Cys-777, Cys-801, Cys-806, His-819, Cys-825, Cys-854, Cys-859, His-872, and Cys-878. The stretch at 905–974 (IEGDEEIRHL…KELAGLSQAL (70 aa)) forms a coiled coil.

The protein belongs to the MYT1 family. In terms of tissue distribution, detected in brain.

Its subcellular location is the nucleus. In terms of biological role, repressor that binds to DNA sequences containing a bipartite element consisting of a direct repeat of the sequence 5'-AAAGTTT-3' separated by 2-9 nucleotides. Represses basal transcription activity from target promoters. This chain is Suppression of tumorigenicity 18 protein (St18), found in Rattus norvegicus (Rat).